We begin with the raw amino-acid sequence, 183 residues long: Ribose 1,5-bisphosphate phosphokinase PhnN (183 aa).

Belongs to the ribose 1,5-bisphosphokinase family.

It catalyses the reaction alpha-D-ribose 1,5-bisphosphate + ATP = 5-phospho-alpha-D-ribose 1-diphosphate + ADP. Its pathway is metabolic intermediate biosynthesis; 5-phospho-alpha-D-ribose 1-diphosphate biosynthesis; 5-phospho-alpha-D-ribose 1-diphosphate from D-ribose 5-phosphate (route II): step 3/3. In terms of biological role, catalyzes the phosphorylation of ribose 1,5-bisphosphate to 5-phospho-D-ribosyl alpha-1-diphosphate (PRPP). The polypeptide is Ribose 1,5-bisphosphate phosphokinase PhnN (Azotobacter vinelandii (strain DJ / ATCC BAA-1303)).